A 112-amino-acid polypeptide reads, in one-letter code: Carboxysome shell protein CcmK4 (112 aa).

A BMC domain is found at 6–92 (AVGSIETIGF…PHENVVAVLP (87 aa)).

The protein belongs to the bacterial microcompartments protein family. CcmK subfamily. As to quaternary structure, homohexamer. Interacts with full-length CcmM. Forms mixed heterohexamers with CcmK3, probably with 1:5 CcmK3:CcmK4 stoichiometry. Only very weak interactions with CcmK1 and CcmK2 were seen.

It localises to the carboxysome. In terms of biological role, a probably minor shell protein component of the carboxysome, a polyhedral inclusion where RuBisCO (ribulose bisphosphate carboxylase, rbcL-rbcS) is sequestered. The central pore probably regulates metabolite flux, as might the gaps between assembled homohexamers. Homohexamers make sheets that probably form the facets of the polyhedral carboxysome. This subunit probably makes both homohexamers and heterohexamers with CcmK3. The chain is Carboxysome shell protein CcmK4 from Synechocystis sp. (strain ATCC 27184 / PCC 6803 / Kazusa).